Here is a 497-residue protein sequence, read N- to C-terminus: tRNA (adenine(58)-N(1))-methyltransferase non-catalytic subunit TRM6 (497 aa).

2 disordered regions span residues Met-1–Ile-20 and Thr-69–Asp-100. The segment covering Lys-79–Asp-100 has biased composition (basic and acidic residues). A substrate-binding site is contributed by Asn-94 to Gln-104. Thr-107 bears the Phosphothreonine mark. Substrate contacts are provided by residues Lys-145–Tyr-154 and Arg-175–His-182. The tract at residues Ser-276–Arg-354 is disordered. 2 positions are modified to phosphoserine: Ser-298 and Ser-305. A compositionally biased stretch (basic and acidic residues) spans Asp-327–Arg-354. Substrate is bound by residues Arg-349, Arg-377, Arg-415 to Leu-423, and Gln-434 to His-441. Residues Ser-472–Ser-497 form a disordered region. Residues Glu-478–Ser-497 are compositionally biased toward basic and acidic residues.

It belongs to the TRM6/GCD10 family. In terms of assembly, heterotetramer; composed of two copies of TRMT6 and two copies of TRMT61A. Expressed in brain, liver, testis and ovary.

It is found in the nucleus. Its function is as follows. Substrate-binding subunit of tRNA (adenine-N(1)-)-methyltransferase, which catalyzes the formation of N(1)-methyladenine at position 58 (m1A58) in initiator methionyl-tRNA. Together with the TRMT61A catalytic subunit, part of a mRNA N(1)-methyltransferase complex that mediates methylation of adenosine residues at the N(1) position of a small subset of mRNAs: N(1) methylation takes place in tRNA T-loop-like structures of mRNAs and is only present at low stoichiometries. The chain is tRNA (adenine(58)-N(1))-methyltransferase non-catalytic subunit TRM6 (TRMT6) from Homo sapiens (Human).